The primary structure comprises 653 residues: Chaperone protein dnaK3 (653 aa).

At Thr197 the chain carries Phosphothreonine; by autocatalysis.

Belongs to the heat shock protein 70 family.

Acts as a chaperone. The sequence is that of Chaperone protein dnaK3 (dnaK3) from Nostoc sp. (strain PCC 7120 / SAG 25.82 / UTEX 2576).